Reading from the N-terminus, the 245-residue chain is Lytic switch protein BZLF1 (245 aa).

Residues 1 to 167 (MMDPNSTSED…RTRKPLQPES (167 aa)) are transactivation. 2 positions are modified to phosphothreonine: threonine 14 and threonine 159. The disordered stretch occupies residues 140–167 (QLADIGAPQPAPAAAPARRTRKPLQPES). A Bipartite nuclear localization signal motif is present at residues 157–194 (RRTRKPLQPESLEECDSELDIKRYKNRVASRKCRAKFK). Phosphoserine occurs at positions 167, 173, and 186. Residues 178–195 (KRYKNRVASRKCRAKFKH) are basic motif. The 51-residue stretch at 178–228 (KRYKNRVASRKCRAKFKHLLQHYREVASAKSSENDRLRLLLKQMCPSLDVD) folds into the bZIP domain. The segment at 196-228 (LLQHYREVASAKSSENDRLRLLLKQMCPSLDVD) is leucine-zipper. The interval 229 to 245 (SIIPRTPDVLHEDLLNF) is accessory activation domain.

The protein belongs to the bZIP family. In terms of assembly, homodimer. Interacts (via b-ZIP domain) with the DNA polymerase processivity factor BMRF1 (via N-terminus); this interaction may inhibit BZLF1-induced transcription of the BMRF1 promoter. Interacts with human UBN1, CRTC2 and RACK1. Interacts (via N-terminus) with human PAX5 (via N-terminus); this interaction inhibits BZLF1-mediated lytic viral reactivation. Interacts (via leucine-zipper domain) with host CEBPA; this interaction induces G1 host cell cycle arrest. Interacts (via C-terminus) with host TP53BP1 (via C-terminus); this interaction is involved in the activation of the viral lytic cycle. Interacts with host chromatin-remodeling ATPase INO80; this interaction participates to the activation of early lytic viral genes by BZLF1. Interacts with host regulator of chromatin SMARCA5/hSNF2H; this interaction participates to the activation of early lytic viral genes by BZLF1. Interacts with host PLSCR1/Phospholipid scramblase 1; this interaction negatively regulates the transcriptional regulatory activity of BZLF1 by preventing the formation of the BZLF1-CBP complex.

Its subcellular location is the host nucleus. In terms of biological role, transcription factor that acts as a molecular switch to induce the transition from the latent to the lytic or productive phase of the virus cycle. Mediates the switch from the latent to the lytic cycle of infection in cells containing a highly methylated viral genome. Probably binds to silenced chromatin and recruits host chromatin-remodeling enzymes. Regulates this switch by binding to 2 types of ZEBRA response elements (ZREs): the CpG-free AP-1 like elements (latency) and the methylated CpG-containing elements (lytic replication). Activates preferentially the methylated forms of the viral lytic R (BRLF1) and Na (BRRF1) gene promoters, the latters being the first genes activated during Z-mediated reactivation in latently infected cells. BZLF1 and BRLF1 act together to trigger lytic replication. Also binds the lytic origin of replication, oriLyt. Induces G1 cell cycle arrest by stabilizing the host CCAAT/enhancer binding protein CEBPA. This function is important because the lytic cycle preferentially takes place in host cells arrested in G1. This Epstein-Barr virus (strain AG876) (HHV-4) protein is Lytic switch protein BZLF1.